A 143-amino-acid polypeptide reads, in one-letter code: Histone H2B (143 aa).

Residues 1 to 52 are disordered; that stretch reads MAPKPASTAGKAPASTASKAPVKSDAAKTASKSKVSSGADGEKKKRKKTRKE. K11 is subject to N6-acetyllysine; alternate. A Glycyl lysine isopeptide (Lys-Gly) (interchain with G-Cter in SUMO); alternate cross-link involves residue K11. S15 carries the post-translational modification Phosphoserine. K19 is modified (N6-acetyllysine). The span at 23–39 shows a compositional bias: low complexity; sequence KSDAAKTASKSKVSSGA. Residue K137 forms a Glycyl lysine isopeptide (Lys-Gly) (interchain with G-Cter in ubiquitin) linkage.

The protein belongs to the histone H2B family. In terms of assembly, the nucleosome is a histone octamer containing two molecules each of H2A, H2B, H3 and H4 assembled in one H3-H4 heterotetramer and two H2A-H2B heterodimers. The octamer wraps approximately 147 bp of DNA. Monoubiquitinated to form H2BK123ub1. H2BK123ub1 gives a specific tag for epigenetic transcriptional activation and is also prerequisite for H3K4me and H3K79me formation. H2BK123ub1 also modulates the formation of double-strand breaks during meiosis and is a prerequisite for DNA-damage checkpoint activation. In terms of processing, phosphorylated to form H2BS10ph during progression through meiotic prophase. May be correlated with chromosome condensation. Post-translationally, acetylation of N-terminal lysines and particularly formation of H2BK11ac has a positive effect on transcription. Sumoylation to form H2BK6su occurs preferentially near the telomeres and represses gene transcription.

The protein localises to the nucleus. It localises to the chromosome. Functionally, core component of nucleosome. Nucleosomes wrap and compact DNA into chromatin, limiting DNA accessibility to the cellular machineries which require DNA as a template. Histones thereby play a central role in transcription regulation, DNA repair, DNA replication and chromosomal stability. DNA accessibility is regulated via a complex set of post-translational modifications of histones, also called histone code, and nucleosome remodeling. This is Histone H2B (htbA) from Agaricus bisporus (White button mushroom).